The sequence spans 775 residues: Semaphorin-3E (775 aa).

Positions 1 to 25 (MAPAGHILTLLLWGHLLELWTPGHS) are cleaved as a signal peptide. The Sema domain occupies 32-516 (RLRLSHKELL…SASAVAQVRF (485 aa)). Asn-44 carries N-linked (GlcNAc...) asparagine glycosylation. Cys-105 and Cys-115 are oxidised to a cystine. An N-linked (GlcNAc...) asparagine glycan is attached at Asn-126. Cysteines 133 and 142 form a disulfide. N-linked (GlcNAc...) asparagine glycosylation is found at Asn-175 and Asn-330. 3 disulfide bridges follow: Cys-270–Cys-382, Cys-294–Cys-342, and Cys-519–Cys-537. The region spanning 581–669 (ALDRTEERLA…NFVHTVRKIT (89 aa)) is the Ig-like C2-type domain. Residue Asn-596 is glycosylated (N-linked (GlcNAc...) asparagine). Residues Cys-654 and Cys-729 are joined by a disulfide bond.

It belongs to the semaphorin family. As to quaternary structure, interacts with PLXND1. Detected in neurons in the thalamus. Detected in embryonic vasculature. Developing lungs, developing skeletal elements and ventral horns of the developing neural tube. Correlates positively with tumor progression.

It localises to the secreted. Functionally, plays an important role in signaling via the cell surface receptor PLXND1. Mediates reorganization of the actin cytoskeleton, leading to the retraction of cell projections. Promotes focal adhesion disassembly and inhibits adhesion of endothelial cells to the extracellular matrix. Regulates angiogenesis, both during embryogenesis and after birth. Can down-regulate sprouting angiogenesis. Required for normal vascular patterning during embryogenesis. Plays an important role in ensuring the specificity of synapse formation. This chain is Semaphorin-3E (Sema3e), found in Mus musculus (Mouse).